The sequence spans 39 residues: Bacteriocin E50-52 (39 aa).

It localises to the secreted. Functionally, bacteriocin active against the Gram-negative bacteria C.jejuni, Y.enterocolitica and Y.pseudotuberculosis, and the Gram-positive bacteria S.aureus, S.epidermidis, L.monocytogenes and Listeria spp. When added to the drinking water of chickens, causes a decrease in the levels of C.jejuni and S.enteritidis in the ceca, and in the levels of S.enteritidis in the liver and spleen. The polypeptide is Bacteriocin E50-52 (Enterococcus faecium (Streptococcus faecium)).